Consider the following 205-residue polypeptide: tRNA 2-(methylsulfanyl)-N(6)-isopentenyladenosine(37) hydroxylase (205 aa).

Residues E38, E69, H72, E122, E151, and H154 each coordinate Fe cation.

Belongs to the MiaE family. As to quaternary structure, homodimer. Requires Fe cation as cofactor.

The enzyme catalyses 2-methylsulfanyl-N(6)-dimethylallyladenosine(37) in tRNA + AH2 + O2 = N(6)-[(2E)-4-hydroxy-3-methylbut-2-en-1-yl]-2-(methylsulfanyl)adenosine(37) in tRNA + A + H2O. It participates in tRNA modification; 2-methylthio-N-6-(cis-hydroxy)isopentenyl adenosine-tRNA biosynthesis. Its function is as follows. Involved in specific tRNA modification. Catalyzes the oxygen-dependent hydroxylation of 2-methylthio-N-6-isopentenyl adenosine (ms2i6A) to produce 2-methylthio-N-6-(cis-hydroxy)isopentenyl adenosine (ms2io6A) at position 37 in tRNAs. This Pseudomonas putida (strain ATCC 47054 / DSM 6125 / CFBP 8728 / NCIMB 11950 / KT2440) protein is tRNA 2-(methylsulfanyl)-N(6)-isopentenyladenosine(37) hydroxylase.